Here is a 708-residue protein sequence, read N- to C-terminus: Fatty acid oxidation complex subunit alpha (708 aa).

Positions 1–191 (MDNNNAFQLS…KLGVVDACVP (191 aa)) are enoyl-CoA hydratase. The segment at 311–708 (APVAAVGVLG…RAGLGEKFYP (398 aa)) is 3-hydroxyacyl-CoA dehydrogenase.

It in the N-terminal section; belongs to the enoyl-CoA hydratase/isomerase family. The protein in the central section; belongs to the 3-hydroxyacyl-CoA dehydrogenase family. In terms of assembly, heterotetramer of two alpha chains (FadJ) and two beta chains (FadI).

It is found in the cytoplasm. It carries out the reaction a (3S)-3-hydroxyacyl-CoA = a (2E)-enoyl-CoA + H2O. The catalysed reaction is a 4-saturated-(3S)-3-hydroxyacyl-CoA = a (3E)-enoyl-CoA + H2O. It catalyses the reaction a (3S)-3-hydroxyacyl-CoA + NAD(+) = a 3-oxoacyl-CoA + NADH + H(+). The enzyme catalyses (3S)-3-hydroxybutanoyl-CoA = (3R)-3-hydroxybutanoyl-CoA. The protein operates within lipid metabolism; fatty acid beta-oxidation. Catalyzes the formation of a hydroxyacyl-CoA by addition of water on enoyl-CoA. Also exhibits 3-hydroxyacyl-CoA epimerase and 3-hydroxyacyl-CoA dehydrogenase activities. This chain is Fatty acid oxidation complex subunit alpha, found in Vibrio cholerae serotype O1 (strain ATCC 39315 / El Tor Inaba N16961).